The sequence spans 360 residues: UPF0283 membrane protein Asuc_0957 (360 aa).

Helical transmembrane passes span 74 to 94 (VIAVAVLFLGATVAQSVQWLI), 102 to 122 (WIYFAFAVVGCSVVGLGLSAL), and 215 to 235 (AVENGIVVAISPLAIVDMLFL).

It belongs to the UPF0283 family.

The protein localises to the cell inner membrane. This Actinobacillus succinogenes (strain ATCC 55618 / DSM 22257 / CCUG 43843 / 130Z) protein is UPF0283 membrane protein Asuc_0957.